Reading from the N-terminus, the 606-residue chain is Sodium-independent sulfate anion transporter (606 aa).

The Extracellular segment spans residues 1–51 (MPSSVTALGQARSSGPGMAPSACCCSPAALQRRLPILAWLPSYSLQWLKMD). The helical transmembrane segment at 52-72 (FVAGLSVGLTAIPQALAYAEV) threads the bilayer. Residue alanine 73 is a topological domain, cytoplasmic. The chain crosses the membrane as a helical span at residues 74–94 (GLPPQYGLYSAFMGCFVYFFL). The Extracellular portion of the chain corresponds to 95–100 (GTSRDV). The chain crosses the membrane as a helical span at residues 101-117 (TLGPTAIMSLLVSFYTF). The Cytoplasmic segment spans residues 118–119 (HE). A helical membrane pass occupies residues 120 to 140 (PAYAVLLAFLSGCIQLAMGVL). The Extracellular portion of the chain corresponds to 141 to 147 (RLGFLLD). The helical transmembrane segment at 148–168 (FISYPVIKGFTSAAAVTIGFG) threads the bilayer. At 169-197 (QIKNLLGLQNIPRPFFLQVYHTFLRIAET) the chain is on the cytoplasmic side. A helical transmembrane segment spans residues 198 to 218 (RVGDAVLGLVCMLLLLVLKLM). Topologically, residues 219-250 (RDHVPPVHPEMPPGVRLSRGLVWAATTARNAL) are extracellular. The chain crosses the membrane as a helical span at residues 251 to 271 (VVSFAALVAYSFEVTGYQPFI). Residues 272 to 307 (LTGETAEGLPPVRIPPFSVTTANGTISFTEMVQDMG) lie on the Cytoplasmic side of the membrane. A helical transmembrane segment spans residues 308–328 (AGLAVVPLMGLLESIAVAKAF). The Extracellular segment spans residues 329-341 (ASQNNYRIDANQE). A helical membrane pass occupies residues 342–362 (LLAIGLTNMLGSLVSSYPVTG). Residues 363–374 (SFGRTAVNAQSG) lie on the Cytoplasmic side of the membrane. Residues 375–395 (VCTPAGGLVTGVLVLLSLDYL) traverse the membrane as a helical segment. Topologically, residues 396 to 398 (TSL) are extracellular. The chain crosses the membrane as a helical span at residues 399–419 (FYYIPKSALAAVIIMAVAPLF). The Cytoplasmic portion of the chain corresponds to 420–441 (DTKIFRTLWRVKRLDLLPLCVT). The helical transmembrane segment at 442-462 (FLLCFWEVQYGILAGALVSLL) threads the bilayer. At 463–606 (MLLHSAARPE…LDQKVALLKA (144 aa)) the chain is on the extracellular side. Residues 470-584 (RPETKVSEGP…EAEKHLRQEP (115 aa)) enclose the STAS domain.

Belongs to the SLC26A/SulP transporter (TC 2.A.53) family. Detected in all tissues tested with highest expression observed in brain, kidney, HEVEC and placenta and lowest in pancreas, skeletal muscle, liver, lung and heart.

It localises to the cell membrane. The protein resides in the lysosome membrane. The protein localises to the apical cell membrane. Its subcellular location is the basolateral cell membrane. The catalysed reaction is hydrogencarbonate(in) + chloride(out) = hydrogencarbonate(out) + chloride(in). It carries out the reaction sulfate(in) + H(+)(in) = sulfate(out) + H(+)(out). It catalyses the reaction oxalate(in) + chloride(out) = oxalate(out) + chloride(in). In terms of biological role, sodium-independent anion exchanger mediating bicarbonate, chloride, sulfate and oxalate transport. Exhibits sodium-independent sulfate anion transporter activity that may cooperate with SLC26A2 to mediate DIDS-sensitive sulfate uptake into high endothelial venules endothelial cells (HEVEC). In the kidney, mediates chloride-bicarbonate exchange, facilitating V-ATPase-mediated acid secretion. May function as a chloride channel, playing an important role in moderating chloride homeostasis and neuronal activity in the cerebellum. In Homo sapiens (Human), this protein is Sodium-independent sulfate anion transporter.